The sequence spans 165 residues: NADPH-dependent 7-cyano-7-deazaguanine reductase (165 aa).

Cysteine 56 acts as the Thioimide intermediate in catalysis. The Proton donor role is filled by aspartate 63. Residues valine 78–serine 80 and histidine 97–glutamate 98 contribute to the substrate site.

This sequence belongs to the GTP cyclohydrolase I family. QueF type 1 subfamily.

The protein localises to the cytoplasm. It carries out the reaction 7-aminomethyl-7-carbaguanine + 2 NADP(+) = 7-cyano-7-deazaguanine + 2 NADPH + 3 H(+). The protein operates within tRNA modification; tRNA-queuosine biosynthesis. Its function is as follows. Catalyzes the NADPH-dependent reduction of 7-cyano-7-deazaguanine (preQ0) to 7-aminomethyl-7-deazaguanine (preQ1). The sequence is that of NADPH-dependent 7-cyano-7-deazaguanine reductase from Geobacillus thermodenitrificans (strain NG80-2).